The sequence spans 313 residues: 3-O-acetylpapaveroxine carboxylesterase CXE2 (313 aa).

Positions 72 to 74 match the Involved in the stabilization of the negatively charged intermediate by the formation of the oxyanion hole motif; sequence HGG. Active-site residues include Ser158, Asp262, and His292.

Belongs to the 'GDXG' lipolytic enzyme family.

It catalyses the reaction 3-O-acetylpapaveroxine + H2O = narcotine hemiacetal + acetate + H(+). Its pathway is alkaloid biosynthesis. Carboxylesterase involved in the biosynthesis of the benzylisoquinoline alkaloid noscapine. Converts 3-O-acetylpapaveroxine to narcotine hemiacetal. This chain is 3-O-acetylpapaveroxine carboxylesterase CXE2, found in Papaver somniferum (Opium poppy).